Reading from the N-terminus, the 409-residue chain is Phosphopentomutase (409 aa).

The Mn(2+) site is built by D10, D308, H313, D349, H350, and H361.

Belongs to the phosphopentomutase family. Requires Mn(2+) as cofactor.

Its subcellular location is the cytoplasm. The catalysed reaction is 2-deoxy-alpha-D-ribose 1-phosphate = 2-deoxy-D-ribose 5-phosphate. It carries out the reaction alpha-D-ribose 1-phosphate = D-ribose 5-phosphate. Its pathway is carbohydrate degradation; 2-deoxy-D-ribose 1-phosphate degradation; D-glyceraldehyde 3-phosphate and acetaldehyde from 2-deoxy-alpha-D-ribose 1-phosphate: step 1/2. In terms of biological role, isomerase that catalyzes the conversion of deoxy-ribose 1-phosphate (dRib-1-P) and ribose 1-phosphate (Rib-1-P) to deoxy-ribose 5-phosphate (dRib-5-P) and ribose 5-phosphate (Rib-5-P), respectively. The polypeptide is Phosphopentomutase (Buchnera aphidicola subsp. Schizaphis graminum (strain Sg)).